A 216-amino-acid polypeptide reads, in one-letter code: Protein Syd (216 aa).

It belongs to the Syd family.

It localises to the cell inner membrane. Its function is as follows. Interacts with the SecY protein in vivo. May bind preferentially to an uncomplexed state of SecY, thus functioning either as a chelating agent for excess SecY in the cell or as a regulatory factor that negatively controls the translocase function. The protein is Protein Syd of Shewanella sp. (strain ANA-3).